Here is a 656-residue protein sequence, read N- to C-terminus: PAN2-PAN3 deadenylation complex subunit PAN3 (656 aa).

A C3H1-type zinc finger spans residues 15–44 (SFKGTQCRNIIIHGYCKFENEGCQFNHGNS). Positions 71–104 (KTSSSFTPGKSPAVRSPDFSSLPAFQPGAPVNDQ) are disordered. Residues 128–148 (AFAPSFNPYASESFTPSVSAG) carry the PABPC-interacting motif-2 (PAM-2) motif. The tract at residues 271–525 (QVFPRGSLPD…NIEDFTKLFS (255 aa)) is pseudokinase domain. ATP is bound by residues arginine 325, 375 to 382 (DYYPQSQS), and 428 to 429 (KK). Residues 526 to 564 (HKVLSVVNSLQYNSEYLEQQLSRELENARLFRLMCKLNA) adopt a coiled-coil conformation. The segment at 565–656 (IYGRLESRID…IDSTFRALTQ (92 aa)) is knob domain.

Belongs to the protein kinase superfamily. PAN3 family. Homodimer. Forms a heterotrimer with a catalytic subunit PAN2 to form the poly(A)-nuclease (PAN) deadenylation complex. Interacts (via PAM-2 motif) with poly(A)-binding protein PAB1 (via PABC domain), conferring substrate specificity of the enzyme complex.

Its subcellular location is the cytoplasm. Functionally, regulatory subunit of the poly(A)-nuclease (PAN) deadenylation complex, one of two cytoplasmic mRNA deadenylases involved in mRNA turnover. PAN specifically shortens poly(A) tails of RNA and the activity is stimulated by poly(A)-binding protein PAB1. PAN deadenylation is followed by rapid degradation of the shortened mRNA tails by the CCR4-NOT complex. Deadenylated mRNAs are then degraded by two alternative mechanisms, namely exosome-mediated 3'-5' exonucleolytic degradation, or deadenylation-dependent mRNA decaping and subsequent 5'-3' exonucleolytic degradation by XRN1. May also be involved in post-transcriptional maturation of mRNA poly(A) tails. PAN3 acts as a positive regulator for PAN activity, recruiting the catalytic subunit PAN2 to mRNA via its interaction with RNA and with PAB1. In Kluyveromyces lactis (strain ATCC 8585 / CBS 2359 / DSM 70799 / NBRC 1267 / NRRL Y-1140 / WM37) (Yeast), this protein is PAN2-PAN3 deadenylation complex subunit PAN3.